We begin with the raw amino-acid sequence, 404 residues long: Cysteine--tRNA ligase (404 aa).

Cysteine 14 is a binding site for Zn(2+). The 'HIGH' region signature appears at 16-26 (PTVYSDVHIGN). Zn(2+) contacts are provided by cysteine 190, histidine 216, and glutamate 220. The short motif at 248–252 (KMAKS) is the 'KMSKS' region element. Lysine 251 contacts ATP.

The protein belongs to the class-I aminoacyl-tRNA synthetase family. As to quaternary structure, monomer. Zn(2+) serves as cofactor.

Its subcellular location is the cytoplasm. It catalyses the reaction tRNA(Cys) + L-cysteine + ATP = L-cysteinyl-tRNA(Cys) + AMP + diphosphate. In Mesomycoplasma hyopneumoniae (strain 232) (Mycoplasma hyopneumoniae), this protein is Cysteine--tRNA ligase.